The primary structure comprises 535 residues: High-affinity fructose transporter ght6 (535 aa).

The Cytoplasmic portion of the chain corresponds to 1–9; that stretch reads MAKILTIVM. The helical transmembrane segment at 10-30 threads the bilayer; the sequence is LVFVSMAGWMFGADTGSIGGI. At 31-58 the chain is on the extracellular side; it reads TNMRDFQSRYADRYDPVTDTYSYSSARQ. A helical membrane pass occupies residues 59–79; sequence GLLVGMVNTGTTVGCLLSSPL. The Cytoplasmic portion of the chain corresponds to 80 to 87; sequence GDRFGKRK. The chain crosses the membrane as a helical span at residues 88 to 108; it reads CIMGWTLVYITGVIVQLTTIP. Topologically, residues 109–112 are extracellular; that stretch reads SWVQ. A helical transmembrane segment spans residues 113-133; it reads MMVAKIWTGLGIGALSVIAPG. Topologically, residues 134–144 are cytoplasmic; sequence YQSESSPPHIR. A helical membrane pass occupies residues 145-165; that stretch reads GAIVTTYQLFITLGIFIAACI. Over 166 to 181 the chain is Extracellular; it reads NMGTHKYTTHPEAQWR. The chain crosses the membrane as a helical span at residues 182–202; the sequence is VPIGINLLWGILMFFGMLFLP. Topologically, residues 203 to 268 are cytoplasmic; that stretch reads ESPRYLAVKG…IFSNEIRYRT (66 aa). Residues 269–287 form a helical membrane-spanning segment; the sequence is LLGMGVMAFQQLTGNNYFF. Residues 288 to 303 lie on the Extracellular side of the membrane; that stretch reads YYGTQVFRGTGLNSPF. A helical membrane pass occupies residues 304–324; that stretch reads LAALILDAVNFGCTFGAIFVL. Topologically, residues 325–330 are cytoplasmic; that stretch reads EYFGRR. A helical membrane pass occupies residues 331–351; the sequence is GPLIVGGVWQSICFFIYASVG. Residues 352–365 lie on the Extracellular side of the membrane; the sequence is DRALTRPNGTSNHR. Asn-359 is a glycosylation site (N-linked (GlcNAc...) asparagine). A helical transmembrane segment spans residues 366–386; sequence AGAVMIVFSCLFIFSFAQTWA. The Cytoplasmic portion of the chain corresponds to 387–406; that stretch reads PAAYVIVGESYPIRYRSKCA. The helical transmembrane segment at 407-427 threads the bilayer; the sequence is AVATASNWFWNFMISFFTPFI. At 428-434 the chain is on the extracellular side; the sequence is SNSIGFK. The chain crosses the membrane as a helical span at residues 435 to 455; sequence YGYVFAACNLCAAIIIFLFAK. The Cytoplasmic segment spans residues 456–535; sequence ETKGLTLEEI…PQQVTNPVGL (80 aa). Basic and acidic residues predominate over residues 484 to 508; it reads DREDIKQSDSEKERGPTSKLHEYVE. The interval 484–535 is disordered; the sequence is DREDIKQSDSEKERGPTSKLHEYVEHAPNSYASTHSTESENYPQQVTNPVGL. The segment covering 513 to 535 has biased composition (polar residues); that stretch reads SYASTHSTESENYPQQVTNPVGL.

The protein belongs to the major facilitator superfamily. Sugar transporter (TC 2.A.1.1) family.

Its subcellular location is the membrane. High-affinity fructose transporter. This chain is High-affinity fructose transporter ght6 (ght6), found in Schizosaccharomyces pombe (strain 972 / ATCC 24843) (Fission yeast).